The sequence spans 78 residues: Pigment-dispersing hormone peptides (78 aa).

Residues 1-22 (MRSAVIVTMLVVVALAALLTQG) form the signal peptide. Position 75 is an alanine amide (Ala-75).

This sequence belongs to the arthropod PDH family. In terms of tissue distribution, expressed in eyestalk tissue and cerebral ganglia.

It is found in the secreted. Functionally, the pigment-dispersing hormone causes the migration of the distal retinal pigment into the proximal end of the pigment chromatophore cells and thus decreases the amount of light entering the retinulas. May also function as a neurotransmitter and/or neuromodulator. The chain is Pigment-dispersing hormone peptides from Carcinus maenas (Common shore crab).